The following is a 448-amino-acid chain: Ribulose bisphosphate carboxylase large chain (448 aa).

A propeptide spanning residues 1–2 (MS) is cleaved from the precursor. The residue at position 3 (proline 3) is an N-acetylproline. Lysine 14 carries the N6,N6,N6-trimethyllysine modification. Residues asparagine 122 and threonine 172 each coordinate substrate. The Proton acceptor role is filled by lysine 174. Residue lysine 176 participates in substrate binding. Positions 200, 202, and 203 each coordinate Mg(2+). Lysine 200 bears the N6-carboxylysine mark. Histidine 293 functions as the Proton acceptor in the catalytic mechanism. The substrate site is built by arginine 294, histidine 326, and serine 378.

It belongs to the RuBisCO large chain family. Type I subfamily. Heterohexadecamer of 8 large chains and 8 small chains; disulfide-linked. The disulfide link is formed within the large subunit homodimers. Mg(2+) serves as cofactor. Post-translationally, the disulfide bond which can form in the large chain dimeric partners within the hexadecamer appears to be associated with oxidative stress and protein turnover.

Its subcellular location is the plastid. The protein localises to the chloroplast. It carries out the reaction 2 (2R)-3-phosphoglycerate + 2 H(+) = D-ribulose 1,5-bisphosphate + CO2 + H2O. The enzyme catalyses D-ribulose 1,5-bisphosphate + O2 = 2-phosphoglycolate + (2R)-3-phosphoglycerate + 2 H(+). In terms of biological role, ruBisCO catalyzes two reactions: the carboxylation of D-ribulose 1,5-bisphosphate, the primary event in carbon dioxide fixation, as well as the oxidative fragmentation of the pentose substrate in the photorespiration process. Both reactions occur simultaneously and in competition at the same active site. This chain is Ribulose bisphosphate carboxylase large chain, found in Dichapetalum crassifolium.